Here is a 177-residue protein sequence, read N- to C-terminus: NAD(P)H-quinone oxidoreductase subunit 6, chloroplastic (177 aa).

5 helical membrane passes run Phe10–Thr30, Pro32–Pro52, Ala61–Met81, Leu92–Ile112, and Phe152–Ser172.

This sequence belongs to the complex I subunit 6 family. As to quaternary structure, NDH is composed of at least 16 different subunits, 5 of which are encoded in the nucleus.

The protein resides in the plastid. The protein localises to the chloroplast thylakoid membrane. It carries out the reaction a plastoquinone + NADH + (n+1) H(+)(in) = a plastoquinol + NAD(+) + n H(+)(out). The enzyme catalyses a plastoquinone + NADPH + (n+1) H(+)(in) = a plastoquinol + NADP(+) + n H(+)(out). In terms of biological role, NDH shuttles electrons from NAD(P)H:plastoquinone, via FMN and iron-sulfur (Fe-S) centers, to quinones in the photosynthetic chain and possibly in a chloroplast respiratory chain. The immediate electron acceptor for the enzyme in this species is believed to be plastoquinone. Couples the redox reaction to proton translocation, and thus conserves the redox energy in a proton gradient. This chain is NAD(P)H-quinone oxidoreductase subunit 6, chloroplastic (ndhG), found in Ranunculus macranthus (Large buttercup).